The sequence spans 591 residues: MNQGKIITVSGPLVVASGMQEANIQDICRVGHLGLVGEIIEMRRDQASIQVYEETSGIGPGEPVVTTGCPLSVELGPGLISEMFDGIQRPLDRFQKATDSDFLIRGVAIPSLDRKAKWAFIPKLSVGQEVVAGDILGTVQETAVIEHRIMVPYKVSGTLVAIHAGDFTVTDTVYEIKQEDGSIYQGSLMQTWPVRQSRPVAQKLIPVEPLVTGQRVIDTFFPVTKGGAAAVPGPFGAGKTVVQHQIAKFANVDIVIYVGCGERGNEMTDVLNEFPELIDPNTGQSIMERTVLIANTSNMPVAAREASIYTGITIAEYFRDMGYSVAIMADSTSRWAEALREMSGRLQEMPGDEGYPAYLGSRIAEYYERAGRVRTLGSQEREGTITAIGAVSPPGGDISEPVTQNTLRIVKVFWGLDAPLAQRRHFPAINWLTSYSLYQDDVGSYIDRKQQSNWSNKVTRAMAILQREASLEEIVRLVGLDSLSEQDRLTMAVARQIREDYLQQNAFDSVDTFTSFPKQEAMLTNILTFNEEASKALSLGAYFNEIMEGTAQVRDRIARSKFIPEENLEQIKGLTQKVTKEIHHVLAKGGI.

233-240 lines the ATP pocket; it reads GPFGAGKT.

Belongs to the ATPase alpha/beta chains family.

The catalysed reaction is ATP + H2O + 4 H(+)(in) = ADP + phosphate + 5 H(+)(out). Functionally, produces ATP from ADP in the presence of a proton gradient across the membrane. The V-type alpha chain is a catalytic subunit. The sequence is that of V-type ATP synthase alpha chain from Streptococcus pyogenes serotype M1.